The sequence spans 572 residues: Sialate:O-sulfotransferase 1 (572 aa).

Over 1–14 the chain is Cytoplasmic; it reads MAKPFFRLQKFLRR. The chain crosses the membrane as a helical; Signal-anchor for type II membrane protein span at residues 15 to 35; that stretch reads TQFLLLFLTAAYLMTGSLLLL. The Extracellular segment spans residues 36-572; that stretch reads QRARVALPQA…AGLPREYVPR (537 aa). N-linked (GlcNAc...) asparagine glycosylation is present at N105. Positions 116–135 are disordered; it reads HLTSDPQGPPTLGPEASGPA. WSC domains lie at 139–231 and 242–337; these read QGNY…YSVG and TATY…DTRC. N-linked (GlcNAc...) asparagine glycosylation is found at N254 and N345.

This sequence belongs to the WSCD family.

The protein localises to the golgi apparatus membrane. The catalysed reaction is a ganglioside GM1b + 3'-phosphoadenylyl sulfate = an 8-O-sulfo-ganglioside GM1b + adenosine 3',5'-bisphosphate + H(+). Its function is as follows. Sialate:O-sulfotransferase which catalyzes 8-O-sulfation at the Sia-glycan level using 3'-phosphoadenosine 5'-phosphosulfate (PAPS) as a donor, forming 8-O-sulfated Sia (Sia8S)-glycans. Displays selectivity toward glycolipids such as GM1 gangliosides. The sequence is that of Sialate:O-sulfotransferase 1 (Wscd1) from Rattus norvegicus (Rat).